A 334-amino-acid polypeptide reads, in one-letter code: DNA-directed RNA polymerase subunit alpha (334 aa).

The segment at 1 to 234 is alpha N-terminal domain (alpha-NTD); it reads MQRSLNEFLT…QQLAVFVDFD (234 aa). An alpha C-terminal domain (alpha-CTD) region spans residues 248–334; the sequence is IDPILLRPVD…IRGDDRVLGG (87 aa).

This sequence belongs to the RNA polymerase alpha chain family. As to quaternary structure, homodimer. The RNAP catalytic core consists of 2 alpha, 1 beta, 1 beta' and 1 omega subunit. When a sigma factor is associated with the core the holoenzyme is formed, which can initiate transcription.

It catalyses the reaction RNA(n) + a ribonucleoside 5'-triphosphate = RNA(n+1) + diphosphate. In terms of biological role, DNA-dependent RNA polymerase catalyzes the transcription of DNA into RNA using the four ribonucleoside triphosphates as substrates. The sequence is that of DNA-directed RNA polymerase subunit alpha from Hahella chejuensis (strain KCTC 2396).